The sequence spans 255 residues: ParA family protein CT_582 (255 aa).

This sequence belongs to the ParA family.

The chain is ParA family protein CT_582 from Chlamydia trachomatis serovar D (strain ATCC VR-885 / DSM 19411 / UW-3/Cx).